The chain runs to 98 residues: NADH-ubiquinone oxidoreductase chain 4L (98 aa).

The next 3 helical transmembrane spans lie at M1 to M21, S29 to L49, and I61 to I81.

It belongs to the complex I subunit 4L family. Core subunit of respiratory chain NADH dehydrogenase (Complex I) which is composed of 45 different subunits.

It localises to the mitochondrion inner membrane. The enzyme catalyses a ubiquinone + NADH + 5 H(+)(in) = a ubiquinol + NAD(+) + 4 H(+)(out). Its function is as follows. Core subunit of the mitochondrial membrane respiratory chain NADH dehydrogenase (Complex I) which catalyzes electron transfer from NADH through the respiratory chain, using ubiquinone as an electron acceptor. Part of the enzyme membrane arm which is embedded in the lipid bilayer and involved in proton translocation. The chain is NADH-ubiquinone oxidoreductase chain 4L (MT-ND4L) from Ceratotherium simum (White rhinoceros).